Reading from the N-terminus, the 146-residue chain is 3-dehydroquinate dehydratase (146 aa).

Tyr-22 functions as the Proton acceptor in the catalytic mechanism. Substrate contacts are provided by Asn-73, His-79, and Asp-86. His-99 functions as the Proton donor in the catalytic mechanism. Substrate-binding positions include 100-101 (IS) and Arg-110.

Belongs to the type-II 3-dehydroquinase family. As to quaternary structure, homododecamer.

It catalyses the reaction 3-dehydroquinate = 3-dehydroshikimate + H2O. It participates in metabolic intermediate biosynthesis; chorismate biosynthesis; chorismate from D-erythrose 4-phosphate and phosphoenolpyruvate: step 3/7. In terms of biological role, catalyzes a trans-dehydration via an enolate intermediate. The sequence is that of 3-dehydroquinate dehydratase from Prochlorococcus marinus (strain MIT 9515).